A 314-amino-acid chain; its full sequence is Probable cell division protein WhiA (314 aa).

The H-T-H motif DNA-binding region spans 282–314; it reads SLKELGELCRPPVSKSGAAHRMRQLMALAESLE.

The protein belongs to the WhiA family.

Functionally, involved in cell division and chromosome segregation. The protein is Probable cell division protein WhiA of Symbiobacterium thermophilum (strain DSM 24528 / JCM 14929 / IAM 14863 / T).